Reading from the N-terminus, the 302-residue chain is Nucleotide-binding protein Bcep18194_A6125 (302 aa).

8 to 15 (GISGSGKS) provides a ligand contact to ATP. A GTP-binding site is contributed by 57-60 (DARS).

It belongs to the RapZ-like family.

Functionally, displays ATPase and GTPase activities. This is Nucleotide-binding protein Bcep18194_A6125 from Burkholderia lata (strain ATCC 17760 / DSM 23089 / LMG 22485 / NCIMB 9086 / R18194 / 383).